Here is a 34-residue protein sequence, read N- to C-terminus: Potassium channel toxin alpha-KTx 6.2 (34 aa).

4 disulfide bridges follow: C3–C24, C9–C29, C13–C19, and C31–C34. Cysteine amide is present on C34.

It belongs to the short scorpion toxin superfamily. Potassium channel inhibitor family. Alpha-KTx 06 subfamily. As to expression, expressed by the venom gland.

It localises to the secreted. Its function is as follows. Blocks voltage-gated potassium channels Kv1.2/KCNA2 (IC(50)=0.12-0.8 nM), KCa3.1/KCNN4 (IC(50)=1-2.2 nM), Shaker B (IC(50)=2.39-80 nM), Kv1.1/KCNA1 (IC(50)=37-45 or no activity, depending on the study), Kv1.3/KCNA3 (IC(50)=150-180 or no activity, depending on the study). In Scorpio palmatus (Israeli golden scorpion), this protein is Potassium channel toxin alpha-KTx 6.2.